A 276-amino-acid chain; its full sequence is NAD kinase (276 aa).

Asp-61 serves as the catalytic Proton acceptor. NAD(+) contacts are provided by residues 61-62, 134-135, Arg-145, Lys-162, Asp-164, Val-172, 175-180, and Gln-234; these read DG, ND, and TAYSFS.

It belongs to the NAD kinase family. The cofactor is a divalent metal cation.

The protein resides in the cytoplasm. It catalyses the reaction NAD(+) + ATP = ADP + NADP(+) + H(+). Functionally, involved in the regulation of the intracellular balance of NAD and NADP, and is a key enzyme in the biosynthesis of NADP. Catalyzes specifically the phosphorylation on 2'-hydroxyl of the adenosine moiety of NAD to yield NADP. In Clostridium perfringens (strain 13 / Type A), this protein is NAD kinase.